The following is a 284-amino-acid chain: L-ribulose-5-phosphate 3-epimerase UlaE (284 aa).

This sequence belongs to the L-ribulose-5-phosphate 3-epimerase family.

The enzyme catalyses L-ribulose 5-phosphate = L-xylulose 5-phosphate. Its pathway is cofactor degradation; L-ascorbate degradation; D-xylulose 5-phosphate from L-ascorbate: step 3/4. Its function is as follows. Catalyzes the isomerization of L-xylulose-5-phosphate to L-ribulose-5-phosphate. Is involved in the anaerobic L-ascorbate utilization. This chain is L-ribulose-5-phosphate 3-epimerase UlaE, found in Escherichia coli O157:H7 (strain EC4115 / EHEC).